Here is a 252-residue protein sequence, read N- to C-terminus: Carboxy-S-adenosyl-L-methionine synthase (252 aa).

Residues Y45, 70–72, 95–96, 127–128, N142, and R209 contribute to the S-adenosyl-L-methionine site; these read GCS, DN, and DI.

The protein belongs to the class I-like SAM-binding methyltransferase superfamily. Cx-SAM synthase family. In terms of assembly, homodimer.

It catalyses the reaction prephenate + S-adenosyl-L-methionine = carboxy-S-adenosyl-L-methionine + 3-phenylpyruvate + H2O. In terms of biological role, catalyzes the conversion of S-adenosyl-L-methionine (SAM) to carboxy-S-adenosyl-L-methionine (Cx-SAM). This Pseudomonas paraeruginosa (strain DSM 24068 / PA7) (Pseudomonas aeruginosa (strain PA7)) protein is Carboxy-S-adenosyl-L-methionine synthase.